Reading from the N-terminus, the 288-residue chain is General transcription factor IIE subunit 2 (288 aa).

The tract at residues 16 to 56 is disordered; sequence ALTTPAVEKRPSASSESSKKKRAKLELSSTSGSKPSSDGSN. Residues 41–56 are compositionally biased toward low complexity; sequence ELSSTSGSKPSSDGSN. Residues 63-143 constitute a DNA-binding region (TFIIE beta); the sequence is SLSGSSGYKF…YAFKPKYNLK (81 aa).

It belongs to the TFIIE beta subunit family. As to quaternary structure, tetramer of two alpha and two beta chains.

Its subcellular location is the nucleus. Recruits TFIIH to the initiation complex and stimulates the RNA polymerase II C-terminal domain kinase and DNA-dependent ATPase activities of TFIIH. Both TFIIH and TFIIE are required for promoter clearance by RNA polymerase. This Xenopus laevis (African clawed frog) protein is General transcription factor IIE subunit 2 (gtf2e2).